A 393-amino-acid polypeptide reads, in one-letter code: Chalcone synthase DIII (393 aa).

Residue Cys-164 is part of the active site.

Belongs to the thiolase-like superfamily. Chalcone/stilbene synthases family.

The enzyme catalyses (E)-4-coumaroyl-CoA + 3 malonyl-CoA + 3 H(+) = 2',4,4',6'-tetrahydroxychalcone + 3 CO2 + 4 CoA. The protein operates within secondary metabolite biosynthesis; flavonoid biosynthesis. In terms of biological role, the primary product of this enzyme is 4,2',4',6'-tetrahydroxychalcone (also termed naringenin-chalcone or chalcone) which can under specific conditions spontaneously isomerize into naringenin. In Ipomoea batatas (Sweet potato), this protein is Chalcone synthase DIII (CHS-DIII).